A 213-amino-acid chain; its full sequence is Neuromodulin (213 aa).

A disordered region spans residues 1 to 213 (MLCCIRRTKP…AEEAGKDQNV (213 aa)). S-palmitoyl cysteine attachment occurs at residues C3 and C4. Positions 9 to 33 (KPVEKNEEADQEIKQDGTKPEENAH) are enriched in basic and acidic residues. An IQ domain is found at 32–61 (AHKAATKIQASFRGHITRKKMKDEDKDGEN). A compositionally biased stretch (acidic residues) spans 57–73 (KDGENDTAPDESAETEE). Basic and acidic residues predominate over residues 74-86 (KEERVSPSEEKPV). Positions 102-122 (PNSPAAEAPPTAATDSAPSDT) are enriched in low complexity. Residues 157 to 169 (EKEEEEEEEEEEE) are compositionally biased toward acidic residues. Residues 191 to 213 (QTDKKEALDDSKPAEEAGKDQNV) show a composition bias toward basic and acidic residues.

Belongs to the neuromodulin family. Binds calmodulin with a greater affinity in the absence of Ca(2+) than in its presence. In terms of processing, palmitoylated. Palmitoylation is essential for plasma membrane association.

The protein resides in the cell membrane. It localises to the cell projection. The protein localises to the growth cone membrane. Its subcellular location is the synapse. It is found in the filopodium membrane. Functionally, this protein is associated with nerve growth. It is a major component of the motile 'growth cones' that form the tips of elongating axons. Plays a role in axonal and dendritic filopodia induction. This is Neuromodulin (gap43) from Carassius auratus (Goldfish).